Reading from the N-terminus, the 156-residue chain is Arginine repressor (156 aa).

The protein belongs to the ArgR family.

The protein localises to the cytoplasm. It functions in the pathway amino-acid biosynthesis; L-arginine biosynthesis [regulation]. Regulates arginine biosynthesis genes. The chain is Arginine repressor from Sodalis glossinidius (strain morsitans).